The primary structure comprises 595 residues: Wee1-like protein kinase 1-B (595 aa).

The segment covering 1-17 (MNVQPRNMNVQPRNMNV) has biased composition (polar residues). The disordered stretch occupies residues 1–127 (MNVQPRNMNV…CPGTPPHKTF (127 aa)). The segment covering 111 to 122 (PTSPIPECPGTP) has biased composition (pro residues). Residue Thr-186 is modified to Phosphothreonine; by cdk1. A Protein kinase domain is found at 248-518 (FHELEKIGSG…SVALVKHSVL (271 aa)). Residues 254 to 262 (IGSGEFGSV) and Lys-277 contribute to the ATP site. Asp-375 acts as the Proton acceptor in catalysis. The Mg(2+) site is built by Asn-380 and Asp-412. Residues 526–563 (AEQLRIELDAEKFKNALLQKELKKAQIAKAAAEERAHF) are a coiled coil.

It belongs to the protein kinase superfamily. Ser/Thr protein kinase family. WEE1 subfamily. As to quaternary structure, interacts (when phosphorylated at Thr-186) with pin1. In terms of processing, phosphorylation at Thr-186 during M-phase by cdk1 inhibits the kinase activity and leads to interaction with pin1. As to expression, zygotically expressed. Present in oocytes and postgastrula embryos (at least until the tailbud stage). Expression begins at the midblastula stage and increases after the early gastrula stage.

It localises to the nucleus. It carries out the reaction L-tyrosyl-[protein] + ATP = O-phospho-L-tyrosyl-[protein] + ADP + H(+). Acts as a zygotic negative regulator of entry into mitosis (G2 to M transition) by protecting the nucleus from cytoplasmically activated cyclin B1-complexed cdk1 before the onset of mitosis by mediating phosphorylation of cdk1 on 'Tyr-15'. Specifically phosphorylates and inactivates cyclin B1-complexed cdk1 reaching a maximum during G2 phase and a minimum as cells enter M phase. Phosphorylation of cyclin B1-cdk1 occurs exclusively on 'Tyr-15' and phosphorylation of monomeric cdk1 does not occur. In Xenopus laevis (African clawed frog), this protein is Wee1-like protein kinase 1-B (wee1-b).